The primary structure comprises 448 residues: Probable 3-ketoacyl-CoA thiolase (448 aa).

The active-site Acyl-thioester intermediate is the C110. Residues H402 and C432 each act as proton acceptor in the active site.

Belongs to the thiolase-like superfamily. Thiolase family.

The protein localises to the mitochondrion. The catalysed reaction is an acyl-CoA + acetyl-CoA = a 3-oxoacyl-CoA + CoA. The protein operates within lipid metabolism; fatty acid beta-oxidation. Functionally, mitochondrial enzyme that catalyzes reactions of the mitochondrial beta-oxidation pathway. In Caenorhabditis elegans, this protein is Probable 3-ketoacyl-CoA thiolase.